A 208-amino-acid chain; its full sequence is V-type ATP synthase subunit E (208 aa).

The protein belongs to the V-ATPase E subunit family.

Functionally, produces ATP from ADP in the presence of a proton gradient across the membrane. The chain is V-type ATP synthase subunit E from Chlamydia trachomatis serovar A (strain ATCC VR-571B / DSM 19440 / HAR-13).